The following is a 338-amino-acid chain: 5-dehydro-2-deoxygluconokinase (338 aa).

It belongs to the carbohydrate kinase PfkB family.

The catalysed reaction is 5-dehydro-2-deoxy-D-gluconate + ATP = 6-phospho-5-dehydro-2-deoxy-D-gluconate + ADP + H(+). Its pathway is polyol metabolism; myo-inositol degradation into acetyl-CoA; acetyl-CoA from myo-inositol: step 5/7. In terms of biological role, catalyzes the phosphorylation of 5-dehydro-2-deoxy-D-gluconate (2-deoxy-5-keto-D-gluconate or DKG) to 6-phospho-5-dehydro-2-deoxy-D-gluconate (DKGP). This is 5-dehydro-2-deoxygluconokinase from Mesomycoplasma hyopneumoniae (strain J / ATCC 25934 / NCTC 10110) (Mycoplasma hyopneumoniae).